The primary structure comprises 319 residues: Biotin synthase (319 aa).

Residues Ile-44–Arg-273 enclose the Radical SAM core domain. The [4Fe-4S] cluster site is built by Cys-62, Cys-66, and Cys-69. [2Fe-2S] cluster contacts are provided by Ser-106, Cys-138, Cys-198, and Arg-268.

The protein belongs to the radical SAM superfamily. Biotin synthase family. Homodimer. Requires [4Fe-4S] cluster as cofactor. The cofactor is [2Fe-2S] cluster.

It catalyses the reaction (4R,5S)-dethiobiotin + (sulfur carrier)-SH + 2 reduced [2Fe-2S]-[ferredoxin] + 2 S-adenosyl-L-methionine = (sulfur carrier)-H + biotin + 2 5'-deoxyadenosine + 2 L-methionine + 2 oxidized [2Fe-2S]-[ferredoxin]. Its pathway is cofactor biosynthesis; biotin biosynthesis; biotin from 7,8-diaminononanoate: step 2/2. Catalyzes the conversion of dethiobiotin (DTB) to biotin by the insertion of a sulfur atom into dethiobiotin via a radical-based mechanism. The chain is Biotin synthase from Clostridium perfringens (strain ATCC 13124 / DSM 756 / JCM 1290 / NCIMB 6125 / NCTC 8237 / Type A).